The sequence spans 91 residues: Large ribosomal subunit protein bL27 (91 aa).

Positions 1–24 (MAHKKGVGSSRNGRDSNPKMRGVK) are disordered.

It belongs to the bacterial ribosomal protein bL27 family.

The sequence is that of Large ribosomal subunit protein bL27 from Chloroflexus aggregans (strain MD-66 / DSM 9485).